Consider the following 117-residue polypeptide: Small ribosomal subunit protein uS17 (117 aa).

Residues 1–42 (MMAEAKKAAPKKAATAASKDADAKGPKHTPPNPKVRGRRKTR) are disordered.

Belongs to the universal ribosomal protein uS17 family. In terms of assembly, part of the 30S ribosomal subunit.

Its function is as follows. One of the primary rRNA binding proteins, it binds specifically to the 5'-end of 16S ribosomal RNA. This Mycolicibacterium paratuberculosis (strain ATCC BAA-968 / K-10) (Mycobacterium paratuberculosis) protein is Small ribosomal subunit protein uS17.